A 107-amino-acid chain; its full sequence is Nucleoid-associated protein Hhal_0231 (107 aa).

2 disordered regions span residues 1–24 (MKGG…KAQE) and 82–107 (VQRE…KLPF). Over residues 15–24 (MQEDMQKAQE) the composition is skewed to basic and acidic residues.

The protein belongs to the YbaB/EbfC family. In terms of assembly, homodimer.

The protein resides in the cytoplasm. It localises to the nucleoid. Functionally, binds to DNA and alters its conformation. May be involved in regulation of gene expression, nucleoid organization and DNA protection. The chain is Nucleoid-associated protein Hhal_0231 from Halorhodospira halophila (strain DSM 244 / SL1) (Ectothiorhodospira halophila (strain DSM 244 / SL1)).